Reading from the N-terminus, the 208-residue chain is Uracil phosphoribosyltransferase (208 aa).

Residues Arg-78, Arg-103, and 130 to 138 (DPMFATGGT) each bind 5-phospho-alpha-D-ribose 1-diphosphate. Uracil is bound by residues Ile-193 and 198–200 (GDA). Asp-199 is a 5-phospho-alpha-D-ribose 1-diphosphate binding site.

It belongs to the UPRTase family. Requires Mg(2+) as cofactor.

It carries out the reaction UMP + diphosphate = 5-phospho-alpha-D-ribose 1-diphosphate + uracil. It participates in pyrimidine metabolism; UMP biosynthesis via salvage pathway; UMP from uracil: step 1/1. With respect to regulation, allosterically activated by GTP. Catalyzes the conversion of uracil and 5-phospho-alpha-D-ribose 1-diphosphate (PRPP) to UMP and diphosphate. This chain is Uracil phosphoribosyltransferase, found in Campylobacter jejuni subsp. jejuni serotype O:6 (strain 81116 / NCTC 11828).